Consider the following 110-residue polypeptide: MFARAASVFVLSLPILATANVLPRQDNQCNTGSLQCCSSVQSSSSSLVAILLGLLGVAAGGLTGQVGVTCSPITVIGVSGTSCSEQPVCCTGNTFNGVIATGCTPVNVNL.

An N-terminal signal peptide occupies residues 1 to 19 (MFARAASVFVLSLPILATA). 4 cysteine pairs are disulfide-bonded: Cys29/Cys89, Cys36/Cys83, Cys37/Cys70, and Cys90/Cys103.

It belongs to the fungal hydrophobin family. As to quaternary structure, self-assembles to form functional amyloid fibrils called rodlets. Self-assembly into fibrillar rodlets occurs spontaneously at hydrophobic:hydrophilic interfaces and the rodlets further associate laterally to form amphipathic monolayers.

Its subcellular location is the secreted. It localises to the cell wall. Aerial growth, conidiation, and dispersal of filamentous fungi in the environment rely upon a capability of their secreting small amphipathic proteins called hydrophobins (HPBs) with low sequence identity. Class I can self-assemble into an outermost layer of rodlet bundles on aerial cell surfaces, conferring cellular hydrophobicity that supports fungal growth, development and dispersal; whereas Class II form highly ordered films at water-air interfaces through intermolecular interactions but contribute nothing to the rodlet structure. Pnh2 is a class I hydrophobin that might be involved in the attachment of the hydrophilic wall of hyphae to the hydrophobic surface of wood under inorganic phosphate (Pi)-deficient conditions and enable the mycelium to degrade efficiently the components of wood and to acquire nutrients containing Pi. This chain is Class I hydrophobin 2, found in Pholiota nameko.